A 115-amino-acid chain; its full sequence is uncharacterized protein (115 aa).

The disordered stretch occupies residues 9-30; the sequence is EGLRERGASGKNEQKKKKKEKI.

This is an uncharacterized protein from Saccharomyces cerevisiae (strain ATCC 204508 / S288c) (Baker's yeast).